We begin with the raw amino-acid sequence, 278 residues long: Small ribosomal subunit protein uS2 (278 aa).

A disordered region spans residues 235 to 278 (QRRKDHGEGGQQAAGGGRGQRDEINVYQGGRGGRGGGPRQQQAS). Composition is skewed to gly residues over residues 243–252 (GGQQAAGGGR) and 263–272 (GGRGGRGGGP).

This sequence belongs to the universal ribosomal protein uS2 family.

The protein is Small ribosomal subunit protein uS2 of Sorangium cellulosum (strain So ce56) (Polyangium cellulosum (strain So ce56)).